A 139-amino-acid polypeptide reads, in one-letter code: Protein LTO1 homolog (139 aa).

Belongs to the LTO1 family.

The protein is Protein LTO1 homolog of Dictyostelium discoideum (Social amoeba).